A 244-amino-acid polypeptide reads, in one-letter code: 14-3-3 protein beta/alpha-B (244 aa).

Position 1 is an N-acetylmethionine (M1).

This sequence belongs to the 14-3-3 family. As to quaternary structure, homodimer, and heterodimer with other family members.

The protein resides in the cytoplasm. Its function is as follows. Adapter protein implicated in the regulation of a large spectrum of both general and specialized signaling pathways. Binds to a large number of partners, usually by recognition of a phosphoserine or phosphothreonine motif. Binding generally results in the modulation of the activity of the binding partner. In Xenopus laevis (African clawed frog), this protein is 14-3-3 protein beta/alpha-B (ywhab-b).